We begin with the raw amino-acid sequence, 569 residues long: Sulfite reductase [NADPH] hemoprotein beta-component (569 aa).

[4Fe-4S] cluster is bound by residues cysteine 433, cysteine 439, cysteine 478, and cysteine 482. Cysteine 482 serves as a coordination point for siroheme.

This sequence belongs to the nitrite and sulfite reductase 4Fe-4S domain family. As to quaternary structure, alpha(8)-beta(8). The alpha component is a flavoprotein, the beta component is a hemoprotein. The cofactor is siroheme. It depends on [4Fe-4S] cluster as a cofactor.

It catalyses the reaction hydrogen sulfide + 3 NADP(+) + 3 H2O = sulfite + 3 NADPH + 4 H(+). Its pathway is sulfur metabolism; hydrogen sulfide biosynthesis; hydrogen sulfide from sulfite (NADPH route): step 1/1. In terms of biological role, component of the sulfite reductase complex that catalyzes the 6-electron reduction of sulfite to sulfide. This is one of several activities required for the biosynthesis of L-cysteine from sulfate. The polypeptide is Sulfite reductase [NADPH] hemoprotein beta-component (Buchnera aphidicola subsp. Acyrthosiphon pisum (strain Tuc7)).